A 512-amino-acid chain; its full sequence is Glutathione-binding protein GsiB (512 aa).

Positions 1 to 26 (MARAVHRSGLVALGIATALMASCAFA) are cleaved as a signal peptide.

This sequence belongs to the bacterial solute-binding protein 5 family. The complex is composed of two ATP-binding proteins (GsiA), two transmembrane proteins (GsiC and GsiD) and a solute-binding protein (GsiB).

The protein resides in the periplasm. Its function is as follows. Part of the ABC transporter complex GsiABCD involved in glutathione import. Binds glutathione. The sequence is that of Glutathione-binding protein GsiB from Escherichia coli O1:K1 / APEC.